A 101-amino-acid chain; its full sequence is Conopressin/conophysin, isoform 3 (101 aa).

A1 is a signal peptide. An intrachain disulfide couples C2 to C7. G10 bears the Glycine amide mark. Residues 11–18 constitute a propeptide that is removed on maturation; it reads GKRNVDEG. Intrachain disulfides connect C23–C63, C26–C37, C31–C53, C38–C43, C70–C88, C82–C100, and C89–C94.

It belongs to the vasopressin/oxytocin family. Expressed by the venom gland.

The protein resides in the secreted. Functionally, targets vasopressin-oxytocin related receptors. Is more active on fish receptors than on their human counterparts, supporting an evolved role of this conopressin in the envenomation process. Acts as an agonist on zebrafish vasopressin receptors V1a1R (EC(50)=10.6 nM), V1a2R (EC(50)=44.06 nM, partial agonist), V2R (EC(50)=299.2 nM) and oxytocin receptor (EC(50)=353.73 nM, partial agonist). Shows a weaker activity on human receptors AVPR1B (EC(50)=51.92 nM), AVPR1A (EC(50)=123.78 nM), AVPR2 (EC(50)=299.2 nM) and oxytocin (OXTR) receptor (EC(50)=455.66 nM, partial agonist). In vivo, exhibits grooming and scratching behavior in mice, following intracerebral injection. The chain is Conopressin/conophysin, isoform 3 from Conus monile (Necklace cone).